The primary structure comprises 602 residues: Myotubularin (602 aa).

Residues 1–32 (MASNSTPKYNSNSLENSLRRSPGDGMNHEQND) are disordered. Residues 17 to 31 (SLRRSPGDGMNHEQN) show a composition bias toward basic and acidic residues. Positions 28 to 96 (HEQNDEIPCL…GVIARIEKMG (69 aa)) constitute a GRAM domain. Positions 162 to 537 (GWAVYDAMTE…RHLELWVNYY (376 aa)) constitute a Myotubularin phosphatase domain. A 1,2-diacyl-sn-glycero-3-phospho-(1D-myo-inositol-3,5-bisphosphate) contacts are provided by Asn-287, Asn-312, and Ile-313. A 1,2-diacyl-sn-glycero-3-phospho-(1D-myo-inositol-3-phosphate) contacts are provided by Asn-287, Asn-312, and Ile-313. Residue Cys-374 is the Phosphocysteine intermediate of the active site. A 1,2-diacyl-sn-glycero-3-phospho-(1D-myo-inositol-3,5-bisphosphate)-binding residues include Ser-375, Asp-376, Gly-377, Trp-378, Asp-379, Arg-380, Lys-416, and Arg-420. Residues Ser-375, Asp-376, Gly-377, Trp-378, Asp-379, and Arg-380 each contribute to the a 1,2-diacyl-sn-glycero-3-phospho-(1D-myo-inositol-3-phosphate) site. Residue Arg-420 participates in a 1,2-diacyl-sn-glycero-3-phospho-(1D-myo-inositol-3-phosphate) binding. Residues 574–602 (QITNSPKMNSSTTSPSSPSQIMPQVHTPF) are disordered. Low complexity predominate over residues 583–592 (SSTTSPSSPS).

The protein belongs to the protein-tyrosine phosphatase family. Non-receptor class myotubularin subfamily.

The protein localises to the cytoplasm. Its subcellular location is the cell membrane. It is found in the cell projection. It localises to the filopodium. The protein resides in the ruffle. The protein localises to the late endosome. Its subcellular location is the myofibril. It is found in the sarcomere. It carries out the reaction a 1,2-diacyl-sn-glycero-3-phospho-(1D-myo-inositol-3-phosphate) + H2O = a 1,2-diacyl-sn-glycero-3-phospho-(1D-myo-inositol) + phosphate. It catalyses the reaction a 1,2-diacyl-sn-glycero-3-phospho-(1D-myo-inositol-3,5-bisphosphate) + H2O = a 1,2-diacyl-sn-glycero-3-phospho-(1D-myo-inositol-5-phosphate) + phosphate. The enzyme catalyses 1,2-dioctanoyl-sn-glycero-3-phospho-(1-D-myo-inositol-3-phosphate) + H2O = 1,2-dioctanoyl-sn-glycero-3-phospho-(1D-myo-inositol) + phosphate. The catalysed reaction is 1,2-dioctanoyl-sn-glycero-3-phospho-(1D-myo-inositol-3,5-bisphosphate) + H2O = 1,2-dioctanoyl-sn-glycero-3-phospho-(1D-myo-inositol-5-phosphate) + phosphate. It carries out the reaction 1,2-dihexadecanoyl-sn-glycero-3-phospho-(1D-myo-inositol-3,5-phosphate) + H2O = 1,2-dihexadecanoyl-sn-glycero-3-phospho-(1D-myo-inositol-5-phosphate) + phosphate. Its function is as follows. Lipid phosphatase which dephosphorylates phosphatidylinositol 3-monophosphate (PI3P) and phosphatidylinositol 3,5-bisphosphate (PI(3,5)P2). The protein is Myotubularin (mtm1) of Xenopus tropicalis (Western clawed frog).